The primary structure comprises 256 residues: Thiazole synthase (256 aa).

Residue lysine 97 is the Schiff-base intermediate with DXP of the active site. Residues glycine 158, 184-185 (AG), and 206-207 (NT) contribute to the 1-deoxy-D-xylulose 5-phosphate site.

This sequence belongs to the ThiG family. As to quaternary structure, homotetramer. Forms heterodimers with either ThiH or ThiS.

The protein localises to the cytoplasm. The catalysed reaction is [ThiS sulfur-carrier protein]-C-terminal-Gly-aminoethanethioate + 2-iminoacetate + 1-deoxy-D-xylulose 5-phosphate = [ThiS sulfur-carrier protein]-C-terminal Gly-Gly + 2-[(2R,5Z)-2-carboxy-4-methylthiazol-5(2H)-ylidene]ethyl phosphate + 2 H2O + H(+). It participates in cofactor biosynthesis; thiamine diphosphate biosynthesis. Functionally, catalyzes the rearrangement of 1-deoxy-D-xylulose 5-phosphate (DXP) to produce the thiazole phosphate moiety of thiamine. Sulfur is provided by the thiocarboxylate moiety of the carrier protein ThiS. In vitro, sulfur can be provided by H(2)S. This is Thiazole synthase from Pelotomaculum thermopropionicum (strain DSM 13744 / JCM 10971 / SI).